The sequence spans 157 residues: Beta-defensin 125 (157 aa).

An N-terminal signal peptide occupies residues 1–20; the sequence is MNLLMLTFIICGLLTQVTKG. Disulfide bonds link C27–C55, C35–C49, and C39–C56. Positions 109 to 157 are disordered; that stretch reads GETITPETNTPETTMPPSETTSSKTTMPPSETATSETMPPPSQTALTHN. The span at 110–140 shows a compositional bias: low complexity; the sequence is ETITPETNTPETTMPPSETTSSKTTMPPSET. Residues 141 to 157 are compositionally biased toward polar residues; that stretch reads ATSETMPPPSQTALTHN.

The protein belongs to the beta-defensin family.

The protein localises to the secreted. Functionally, has antibacterial activity. The sequence is that of Beta-defensin 125 (DEFB125) from Pongo pygmaeus (Bornean orangutan).